Here is a 232-residue protein sequence, read N- to C-terminus: Thiamine import ATP-binding protein ThiQ (232 aa).

In terms of domain architecture, ABC transporter spans Leu2–Ile230. Gly32–Ser39 serves as a coordination point for ATP.

This sequence belongs to the ABC transporter superfamily. Thiamine importer (TC 3.A.1.19.1) family. As to quaternary structure, the complex is composed of two ATP-binding proteins (ThiQ), two transmembrane proteins (ThiP) and a solute-binding protein (ThiB).

The protein resides in the cell inner membrane. It catalyses the reaction thiamine(out) + ATP + H2O = thiamine(in) + ADP + phosphate + H(+). Part of the ABC transporter complex ThiBPQ involved in thiamine import. Responsible for energy coupling to the transport system. This Escherichia coli (strain UTI89 / UPEC) protein is Thiamine import ATP-binding protein ThiQ.